Reading from the N-terminus, the 276-residue chain is Large ribosomal subunit protein uL2 (276 aa).

Positions 221–276 are disordered; the sequence is RGSAMNPNDHPHGGGEGRAPIGRKSPMTPWGKKARGVKTRDRKKASNALIIRRRTK. The span at 252 to 276 shows a compositional bias: basic residues; the sequence is KKARGVKTRDRKKASNALIIRRRTK.

It belongs to the universal ribosomal protein uL2 family. Part of the 50S ribosomal subunit. Forms a bridge to the 30S subunit in the 70S ribosome.

In terms of biological role, one of the primary rRNA binding proteins. Required for association of the 30S and 50S subunits to form the 70S ribosome, for tRNA binding and peptide bond formation. It has been suggested to have peptidyltransferase activity; this is somewhat controversial. Makes several contacts with the 16S rRNA in the 70S ribosome. The chain is Large ribosomal subunit protein uL2 from Onion yellows phytoplasma (strain OY-M).